Consider the following 198-residue polypeptide: Ribosome maturation factor RimP (198 aa).

The protein belongs to the RimP family.

The protein localises to the cytoplasm. In terms of biological role, required for maturation of 30S ribosomal subunits. The chain is Ribosome maturation factor RimP from Rhizobium etli (strain ATCC 51251 / DSM 11541 / JCM 21823 / NBRC 15573 / CFN 42).